The primary structure comprises 172 residues: 3-hydroxydecanoyl-[acyl-carrier-protein] dehydratase (172 aa).

The active site involves histidine 71.

It belongs to the thioester dehydratase family. FabA subfamily. As to quaternary structure, homodimer.

Its subcellular location is the cytoplasm. It catalyses the reaction a (3R)-hydroxyacyl-[ACP] = a (2E)-enoyl-[ACP] + H2O. It carries out the reaction (3R)-hydroxydecanoyl-[ACP] = (2E)-decenoyl-[ACP] + H2O. The enzyme catalyses (2E)-decenoyl-[ACP] = (3Z)-decenoyl-[ACP]. It functions in the pathway lipid metabolism; fatty acid biosynthesis. Necessary for the introduction of cis unsaturation into fatty acids. Catalyzes the dehydration of (3R)-3-hydroxydecanoyl-ACP to E-(2)-decenoyl-ACP and then its isomerization to Z-(3)-decenoyl-ACP. Can catalyze the dehydratase reaction for beta-hydroxyacyl-ACPs with saturated chain lengths up to 16:0, being most active on intermediate chain length. In Proteus mirabilis (strain HI4320), this protein is 3-hydroxydecanoyl-[acyl-carrier-protein] dehydratase.